The chain runs to 955 residues: Kinesin heavy chain isoform 5C (955 aa).

In terms of domain architecture, Kinesin motor spans 8–327; it reads SIKVMCRFRP…LMFGQRAKTI (320 aa). Positions 87, 89, 90, 91, 92, 93, 94, and 99 each coordinate ATP. Positions 174-315 are microtubule-binding; the sequence is VSSPEEVMDV…PSVFNEAETK (142 aa). Residues 332–366 adopt a coiled-coil conformation; that stretch reads SVNLELTAEEWKKKYEKEKEKNKALKSVIQHLEVE. Residue Thr403 is modified to Phosphothreonine. 2 coiled-coil regions span residues 413 to 538 and 590 to 913; these read KEKY…LQEL and ISKM…KNMA. Positions 859-955 are globular; it reads CELPKLEKRL…GSSNSTHYQK (97 aa). Residues 909 to 955 form a disordered region; sequence AKNMARRAHSAQIAKPIRPGHYPASSPTAVHAVRGGGGSSNSTHYQK.

This sequence belongs to the TRAFAC class myosin-kinesin ATPase superfamily. Kinesin family. Kinesin subfamily. As to quaternary structure, oligomer composed of two heavy chains and two light chains. Interacts with GRIP1. Interacts with TRAK1. Interacts with ZFYVE27. Interacts with KLC3.

The protein resides in the cytoplasm. Its subcellular location is the cytoskeleton. It localises to the cell projection. The protein localises to the dendrite. It catalyses the reaction ATP + H2O = ADP + phosphate + H(+). Microtubule-associated force-producing protein that may play a role in organelle transport. Has ATPase activity. Involved in synaptic transmission. Mediates dendritic trafficking of mRNAs. Required for anterograde axonal transportation of MAPK8IP3/JIP3 which is essential for MAPK8IP3/JIP3 function in axon elongation. This chain is Kinesin heavy chain isoform 5C (Kif5c), found in Rattus norvegicus (Rat).